Here is a 316-residue protein sequence, read N- to C-terminus: Mitochondrial GTPase 1 (316 aa).

The CP-type G domain occupies 28-203 (MKQMQQKLKQ…LLDTPGILKP (176 aa)). Residues 73–76 (NKKD), 147–152 (NVGKSS), and Gly199 contribute to the GTP site.

This sequence belongs to the TRAFAC class YlqF/YawG GTPase family. MTG1 subfamily.

The protein localises to the mitochondrion inner membrane. Functionally, plays a role in the regulation of the mitochondrial ribosome assembly and of translational activity. Displays mitochondrial GTPase activity. The protein is Mitochondrial GTPase 1 of Aedes aegypti (Yellowfever mosquito).